Here is a 332-residue protein sequence, read N- to C-terminus: MTTYPVPQNPLLLRVLRLMDAFSKSDDERDFYVDRVEGFILYIDLDKDQEDLDKVYQELEENADRYCLIPKLTFYEIKKIMETFVNEKIYDIDTKEKFLEIVQSKNAREQFLEFLYDHETEQEKWQQFYVERSRIRIIEWLRNNKFQFVFEEDLDFSKHVLEQLKVHLFDAKVSKELTQARQLLVNKSKVYYSNEALNPRPKRGRPPKQSAKVEAETTVSSDIYTKVPSAARRFLFLPEITSASSLTFSEKFDTEEEFLAHLRGGGRLEDQLNLAKFSERFDSLRELSAKLGYDGDGDASDFFGEEYDDDDDDDDDVKPKKAAKRGRKKARS.

Disordered regions lie at residues 196–215 (ALNPRPKRGRPPKQSAKVEA) and 291–332 (LGYD…KARS). Over residues 295–316 (GDGDASDFFGEEYDDDDDDDDD) the composition is skewed to acidic residues. Positions 320–332 (KKAAKRGRKKARS) are enriched in basic residues.

This sequence belongs to the UPF0158 family.

The chain is UPF0158 protein TC_0713 from Chlamydia muridarum (strain MoPn / Nigg).